A 208-amino-acid polypeptide reads, in one-letter code: Imidazole glycerol phosphate synthase subunit HisH (208 aa).

The region spanning M1–S206 is the Glutamine amidotransferase type-1 domain. C79 functions as the Nucleophile in the catalytic mechanism. Catalysis depends on residues H181 and E183.

In terms of assembly, heterodimer of HisH and HisF.

Its subcellular location is the cytoplasm. It catalyses the reaction 5-[(5-phospho-1-deoxy-D-ribulos-1-ylimino)methylamino]-1-(5-phospho-beta-D-ribosyl)imidazole-4-carboxamide + L-glutamine = D-erythro-1-(imidazol-4-yl)glycerol 3-phosphate + 5-amino-1-(5-phospho-beta-D-ribosyl)imidazole-4-carboxamide + L-glutamate + H(+). The enzyme catalyses L-glutamine + H2O = L-glutamate + NH4(+). It functions in the pathway amino-acid biosynthesis; L-histidine biosynthesis; L-histidine from 5-phospho-alpha-D-ribose 1-diphosphate: step 5/9. Its function is as follows. IGPS catalyzes the conversion of PRFAR and glutamine to IGP, AICAR and glutamate. The HisH subunit catalyzes the hydrolysis of glutamine to glutamate and ammonia as part of the synthesis of IGP and AICAR. The resulting ammonia molecule is channeled to the active site of HisF. This chain is Imidazole glycerol phosphate synthase subunit HisH, found in Listeria monocytogenes serovar 1/2a (strain ATCC BAA-679 / EGD-e).